The sequence spans 162 residues: Corticoliberin-2 (162 aa).

Positions 1–24 (MRLNFLVTTMALLVAFPPPYECRA) are cleaved as a signal peptide. A propeptide spanning residues 25–119 (IDSSSNQPVT…ALDSEERERR (95 aa)) is cleaved from the precursor. The segment at 57-79 (LGNRNKNSPRSPPDTYPEASQYS) is disordered. Phenylalanine 160 carries the phenylalanine amide modification.

This sequence belongs to the sauvagine/corticotropin-releasing factor/urotensin I family.

Its subcellular location is the secreted. Functionally, this hormone from hypothalamus regulates the release of corticotropin from pituitary gland. The polypeptide is Corticoliberin-2 (crf2) (Catostomus commersonii (White sucker)).